The chain runs to 216 residues: Probable GTP-binding protein EngB (216 aa).

Positions 43 to 216 constitute an EngB-type G domain; sequence DRIEVCFAGR…TLRSIIAHLD (174 aa). GTP-binding positions include 51–58, 78–82, 96–99, 163–166, and 197–199; these read GRSNVGKS, GRTQE, DLPG, TKAD, and TSS. Residues Ser-58 and Thr-80 each contribute to the Mg(2+) site.

It belongs to the TRAFAC class TrmE-Era-EngA-EngB-Septin-like GTPase superfamily. EngB GTPase family. Mg(2+) is required as a cofactor.

Necessary for normal cell division and for the maintenance of normal septation. The polypeptide is Probable GTP-binding protein EngB (Ruegeria sp. (strain TM1040) (Silicibacter sp.)).